The primary structure comprises 441 residues: Dihydroorotase (441 aa).

Residues His77 and His79 each contribute to the Zn(2+) site. Substrate contacts are provided by residues His79 to Arg81 and Asn111. Residues Asp167, His194, and His248 each contribute to the Zn(2+) site. Position 294 (Asn294) interacts with substrate. Residue Asp321 participates in Zn(2+) binding. Asp321 is an active-site residue. Substrate is bound by residues His325 and Phe339–Gly340.

Belongs to the metallo-dependent hydrolases superfamily. DHOase family. Class I DHOase subfamily. Zn(2+) serves as cofactor.

It catalyses the reaction (S)-dihydroorotate + H2O = N-carbamoyl-L-aspartate + H(+). It functions in the pathway pyrimidine metabolism; UMP biosynthesis via de novo pathway; (S)-dihydroorotate from bicarbonate: step 3/3. In terms of biological role, catalyzes the reversible cyclization of carbamoyl aspartate to dihydroorotate. This is Dihydroorotase from Wolbachia sp. subsp. Drosophila simulans (strain wRi).